We begin with the raw amino-acid sequence, 94 residues long: Evasin P1086 (94 aa).

The first 28 residues, 1 to 28 (MAFNVITFLQLAVFVVILFNINLHSASA), serve as a signal peptide directing secretion. 3 disulfides stabilise this stretch: Cys48/Cys67, Cys52/Cys69, and Cys63/Cys80. Asn74 is a glycosylation site (N-linked (GlcNAc...) asparagine).

Its subcellular location is the secreted. Salivary chemokine-binding protein which binds to host chemokines CXCL1, CXCL2, CXCL3, CXCL5, CXCL6, CXCL10, CXCL12 and CXCL13. The polypeptide is Evasin P1086 (Ixodes ricinus (Common tick)).